We begin with the raw amino-acid sequence, 282 residues long: ATP phosphoribosyltransferase (282 aa).

Belongs to the ATP phosphoribosyltransferase family. Long subfamily. Mg(2+) is required as a cofactor.

The protein localises to the cytoplasm. The catalysed reaction is 1-(5-phospho-beta-D-ribosyl)-ATP + diphosphate = 5-phospho-alpha-D-ribose 1-diphosphate + ATP. It functions in the pathway amino-acid biosynthesis; L-histidine biosynthesis; L-histidine from 5-phospho-alpha-D-ribose 1-diphosphate: step 1/9. Its activity is regulated as follows. Feedback inhibited by histidine. Its function is as follows. Catalyzes the condensation of ATP and 5-phosphoribose 1-diphosphate to form N'-(5'-phosphoribosyl)-ATP (PR-ATP). Has a crucial role in the pathway because the rate of histidine biosynthesis seems to be controlled primarily by regulation of HisG enzymatic activity. The chain is ATP phosphoribosyltransferase from Pyrobaculum calidifontis (strain DSM 21063 / JCM 11548 / VA1).